Reading from the N-terminus, the 119-residue chain is Phosphoribosyl-AMP cyclohydrolase (119 aa).

Asp-77 is a binding site for Mg(2+). Residue Cys-78 participates in Zn(2+) binding. The Mg(2+) site is built by Asp-79 and Asp-81. Zn(2+)-binding residues include Cys-94 and Cys-101.

The protein belongs to the PRA-CH family. Homodimer. It depends on Mg(2+) as a cofactor. Zn(2+) serves as cofactor.

It is found in the cytoplasm. It catalyses the reaction 1-(5-phospho-beta-D-ribosyl)-5'-AMP + H2O = 1-(5-phospho-beta-D-ribosyl)-5-[(5-phospho-beta-D-ribosylamino)methylideneamino]imidazole-4-carboxamide. It participates in amino-acid biosynthesis; L-histidine biosynthesis; L-histidine from 5-phospho-alpha-D-ribose 1-diphosphate: step 3/9. In terms of biological role, catalyzes the hydrolysis of the adenine ring of phosphoribosyl-AMP. The chain is Phosphoribosyl-AMP cyclohydrolase from Cereibacter sphaeroides (strain ATCC 17029 / ATH 2.4.9) (Rhodobacter sphaeroides).